A 206-amino-acid chain; its full sequence is MPKLRLIGLTLLALSATAVSHAEETRYVSDELNTWVRSGPGDHYRLVGTVNAGEEVTLLQTDANTNYAQVKDSSGRTAWIPLKQLSTEPSLRSRVPDLENQVKTLTDKLTNIDNTWNQRTAEMQQKVAQSDSVINGLKEENQKLKNELIVAQKKVDAASVQLDDKQRTIIMQWFMYGGGVLGLGLLLGLVLPHLIPSRKRKDRWMN.

Residues 1-22 (MPKLRLIGLTLLALSATAVSHA) form the signal peptide. An SH3b domain is found at 23–89 (EETRYVSDEL…IPLKQLSTEP (67 aa)). The helical transmembrane segment at 169–191 (IIMQWFMYGGGVLGLGLLLGLVL) threads the bilayer.

It to H.influenzae HI_1605.

It localises to the membrane. This is an uncharacterized protein from Escherichia coli O157:H7.